The primary structure comprises 394 residues: DNA replication and repair protein RecF (394 aa).

Residue 30 to 37 participates in ATP binding; it reads GRNGFGKT.

The protein belongs to the RecF family.

The protein resides in the cytoplasm. Its function is as follows. The RecF protein is involved in DNA metabolism; it is required for DNA replication and normal SOS inducibility. RecF binds preferentially to single-stranded, linear DNA. It also seems to bind ATP. This Corynebacterium glutamicum (strain ATCC 13032 / DSM 20300 / JCM 1318 / BCRC 11384 / CCUG 27702 / LMG 3730 / NBRC 12168 / NCIMB 10025 / NRRL B-2784 / 534) protein is DNA replication and repair protein RecF.